We begin with the raw amino-acid sequence, 720 residues long: ATP-dependent DNA helicase Hel308 (720 aa).

Residues S23, Q28, and 46 to 53 contribute to the ATP site; that span reads IPTASGKT. Residues 33–197 enclose the Helicase ATP-binding domain; that stretch reads KSGILEGKNA…WLNAELIVSD (165 aa). A DEAH box motif is present at residues 145 to 148; that stretch reads DEIH. The region spanning 229–422 is the Helicase C-terminal domain; the sequence is LVYDAIRKKK…NLRSQVLALI (194 aa).

It belongs to the helicase family. Hel308 subfamily. In terms of assembly, monomer. Interacts with PCNA. The cofactor is Mg(2+). Zn(2+) serves as cofactor.

The catalysed reaction is Couples ATP hydrolysis with the unwinding of duplex DNA by translocating in the 3'-5' direction.. The enzyme catalyses ATP + H2O = ADP + phosphate + H(+). Functionally, DNA-dependent ATPase and 3'-5' DNA helicase that may be involved in repair of stalled replication forks. Unwinds the lagging strand from forked DNA structures in a 3'-5' direction. PCNA, the DNA polymerase sliding clamp subunit, stimulates the helicase activity, and may alter substrate specificity. Unwinds branched DNA (Holliday junctions) in an ATP-dependent fashion; ss- and dsDNA stimulate ATPase to the greatest extent, although it preferentially binds DNA with a single-stranded region. Processes a RecA-mediated recombination intermediate between gapped circular and homologous linear dsDNA. The sequence is that of ATP-dependent DNA helicase Hel308 from Pyrococcus furiosus (strain ATCC 43587 / DSM 3638 / JCM 8422 / Vc1).